Here is a 407-residue protein sequence, read N- to C-terminus: Expansin-like protein 2 (407 aa).

The signal sequence occupies residues 1–23 (MKMKNFLSKSLLVLLIGLIGVKS). Positions 42 to 141 (HGNCGYEQLT…KKVSCDVTGN (100 aa)) constitute an Expansin-like EG45 domain. 2 disulfides stabilise this stretch: Cys45-Cys75 and Cys78-Cys136. Residues Asn70, Asn117, and Asn387 are each glycosylated (N-linked (GlcNAc...) asparagine).

Belongs to the expansin family. Expansin A subfamily.

It localises to the secreted. Unlikely to encode with a protein with expansin activity. The chain is Expansin-like protein 2 (expl2) from Dictyostelium discoideum (Social amoeba).